The primary structure comprises 605 residues: Isocitrate dehydrogenase kinase/phosphatase (605 aa).

Residues 353–359 and Lys-374 each bind ATP; that span reads APGFKGT. The active site involves Asp-413.

Belongs to the AceK family.

Its subcellular location is the cytoplasm. It catalyses the reaction L-seryl-[isocitrate dehydrogenase] + ATP = O-phospho-L-seryl-[isocitrate dehydrogenase] + ADP + H(+). Bifunctional enzyme which can phosphorylate or dephosphorylate isocitrate dehydrogenase (IDH) on a specific serine residue. This is a regulatory mechanism which enables bacteria to bypass the Krebs cycle via the glyoxylate shunt in response to the source of carbon. When bacteria are grown on glucose, IDH is fully active and unphosphorylated, but when grown on acetate or ethanol, the activity of IDH declines drastically concomitant with its phosphorylation. This is Isocitrate dehydrogenase kinase/phosphatase from Rhodopseudomonas palustris (strain HaA2).